A 21-amino-acid chain; its full sequence is Cupiennin-6c (21 aa).

Serine 21 carries the serine amide modification.

In terms of tissue distribution, expressed by the venom gland.

It is found in the secreted. This is Cupiennin-6c from Cupiennius salei (American wandering spider).